The primary structure comprises 380 residues: MANIRKTHPLLKIINGAFIDLPTPSNISVWWNFGSLLGLCLVTQILTGLFLAMHYTADISTAFSSVAHICRDVNYGWLIRNIHANGASFFFICLYLHVARGMYYGSYLQKETWNIGVILLLLTMMTAFVGYVLPWGQMSFWGATVITNLLSAFPYIGDTLVQWIWGGFSVDNATLTRFFAFHFLLPFVIAGASMIHLLFLHQTGSNNPTGLNSDADKVTFHPYFSYKDLLGFILMLVGLTSVALFSPNLLGDPDNFTPANPLVTPPHIKPEWYFLFAYAILRSIPNKLGGVLALLFSILVLMLVPMLHTSKQRGNTFRPLSQILFWALVADMLVLTWIGGQPVEHPFVLIGQAASTVYFALFLIALPLTGLLENKALNWN.

Transmembrane regions (helical) follow at residues 33–53 (FGSL…FLAM), 77–98 (WLIR…YLHV), 113–133 (WNIG…GYVL), and 178–198 (FFAF…IHLL). Residues H83 and H97 each coordinate heme b. Heme b is bound by residues H182 and H196. H201 contributes to the a ubiquinone binding site. Transmembrane regions (helical) follow at residues 226-246 (YKDL…ALFS), 288-308 (LGGV…PMLH), 320-340 (LSQI…WIGG), and 347-367 (FVLI…IALP).

Belongs to the cytochrome b family. The cytochrome bc1 complex contains 3 respiratory subunits (MT-CYB, CYC1 and UQCRFS1), 2 core proteins (UQCRC1 and UQCRC2) and probably 6 low-molecular weight proteins. Requires heme b as cofactor.

Its subcellular location is the mitochondrion inner membrane. Functionally, component of the ubiquinol-cytochrome c reductase complex (complex III or cytochrome b-c1 complex) that is part of the mitochondrial respiratory chain. The b-c1 complex mediates electron transfer from ubiquinol to cytochrome c. Contributes to the generation of a proton gradient across the mitochondrial membrane that is then used for ATP synthesis. The protein is Cytochrome b (mt-cyb) of Acipenser persicus (Persian sturgeon).